Here is a 461-residue protein sequence, read N- to C-terminus: Mannose-6-phosphate isomerase (461 aa).

Zn(2+)-binding residues include Q107, H109, E134, and H291. R310 is a catalytic residue.

The protein belongs to the mannose-6-phosphate isomerase type 1 family. It depends on Zn(2+) as a cofactor.

It localises to the cytoplasm. It carries out the reaction D-mannose 6-phosphate = D-fructose 6-phosphate. It participates in nucleotide-sugar biosynthesis; GDP-alpha-D-mannose biosynthesis; alpha-D-mannose 1-phosphate from D-fructose 6-phosphate: step 1/2. Involved in the synthesis of the GDP-mannose and dolichol-phosphate-mannose required for a number of critical mannosyl transfer reactions. This is Mannose-6-phosphate isomerase (manA) from Emericella nidulans (strain FGSC A4 / ATCC 38163 / CBS 112.46 / NRRL 194 / M139) (Aspergillus nidulans).